The following is a 621-amino-acid chain: Chaperone protein HscA homolog (621 aa).

This sequence belongs to the heat shock protein 70 family.

Its function is as follows. Chaperone involved in the maturation of iron-sulfur cluster-containing proteins. Has a low intrinsic ATPase activity which is markedly stimulated by HscB. In Pseudomonas fluorescens (strain Pf0-1), this protein is Chaperone protein HscA homolog.